The chain runs to 438 residues: Metacaspase-1B (438 aa).

Residues 1–125 (MYYHHSHQGW…SQHFGRGAPS (125 aa)) form a disordered region. The segment covering 29–38 (PYPYSSNAQY) has biased composition (low complexity). Positions 39–74 (QPPPGPPPTSHYAPPPGPPPSHYYPPPGSYPSPAPS) are enriched in pro residues. Catalysis depends on residues H222 and C278.

The protein belongs to the peptidase C14B family.

In terms of biological role, involved in cell death (apoptosis). In Aspergillus niger (strain ATCC MYA-4892 / CBS 513.88 / FGSC A1513), this protein is Metacaspase-1B (casB).